The chain runs to 116 residues: Neuropeptide Y receptor type 1 (116 aa).

A helical membrane pass occupies residues 1-6 (LVLIAV). The Cytoplasmic portion of the chain corresponds to 7 to 24 (ERHQLIINPRGWRPSNRH). Residues 25-45 (AYVGIAVIWVLAVASSLPFLI) traverse the membrane as a helical segment. Residues 46-81 (YQVLTDEPFQNVTLDAFKDKYVCFDKFPSDSHRLSY) are Extracellular-facing. Asn56 carries an N-linked (GlcNAc...) asparagine glycan. A helical membrane pass occupies residues 82–102 (TTLLLVLQYFGPLCFIFICYF). Residues 103–116 (KIYIRLKRRNNMMD) lie on the Cytoplasmic side of the membrane.

This sequence belongs to the G-protein coupled receptor 1 family.

It is found in the cell membrane. Receptor for neuropeptide Y and peptide YY. This chain is Neuropeptide Y receptor type 1 (NPY1R), found in Ovis aries (Sheep).